A 198-amino-acid chain; its full sequence is Holliday junction branch migration complex subunit RuvA (198 aa).

Positions 1–61 are domain I; the sequence is MILYRIGEII…EYQYATYAFK (61 aa). Positions 62 to 139 are domain II; it reads DFKERLLFVD…KMISPKDAAK (78 aa). Positions 140–144 are flexible linker; the sequence is INETT. A domain III region spans residues 144 to 198; the sequence is TNTLSEVKETLKMVGFKTKQIDGALSKISSTDDVEKMIEEAIKLMSTQNYESATA.

This sequence belongs to the RuvA family. Homotetramer. Forms an RuvA(8)-RuvB(12)-Holliday junction (HJ) complex. HJ DNA is sandwiched between 2 RuvA tetramers; dsDNA enters through RuvA and exits via RuvB. An RuvB hexamer assembles on each DNA strand where it exits the tetramer. Each RuvB hexamer is contacted by two RuvA subunits (via domain III) on 2 adjacent RuvB subunits; this complex drives branch migration. In the full resolvosome a probable DNA-RuvA(4)-RuvB(12)-RuvC(2) complex forms which resolves the HJ.

Its subcellular location is the cytoplasm. Its function is as follows. The RuvA-RuvB-RuvC complex processes Holliday junction (HJ) DNA during genetic recombination and DNA repair, while the RuvA-RuvB complex plays an important role in the rescue of blocked DNA replication forks via replication fork reversal (RFR). RuvA specifically binds to HJ cruciform DNA, conferring on it an open structure. The RuvB hexamer acts as an ATP-dependent pump, pulling dsDNA into and through the RuvAB complex. HJ branch migration allows RuvC to scan DNA until it finds its consensus sequence, where it cleaves and resolves the cruciform DNA. This Mycoplasmopsis agalactiae (strain NCTC 10123 / CIP 59.7 / PG2) (Mycoplasma agalactiae) protein is Holliday junction branch migration complex subunit RuvA.